The primary structure comprises 1201 residues: Protein dduB (1201 aa).

Residues 1–22 (MKFIKYLLILFLILKINYFVES) form the signal peptide. Residues 23–1180 (GVDCQKNTEY…QDPSDELSTS (1158 aa)) lie on the Extracellular side of the membrane. N-linked (GlcNAc...) asparagine glycosylation is found at Asn68, Asn122, Asn150, Asn185, Asn283, Asn348, Asn360, Asn437, Asn448, Asn518, Asn535, Asn554, Asn585, Asn631, Asn759, Asn815, Asn830, Asn844, Asn946, Asn1042, Asn1058, Asn1098, and Asn1108. Residues 1181–1201 (SFIQLNILSLLLISIFTIFIL) traverse the membrane as a helical segment.

It localises to the membrane. This Dictyostelium discoideum (Social amoeba) protein is Protein dduB (dduB).